A 285-amino-acid polypeptide reads, in one-letter code: Release factor glutamine methyltransferase (285 aa).

S-adenosyl-L-methionine is bound by residues 119 to 123 (GTGSG), Glu142, Trp175, and Asn191. 191–194 (NPPY) contacts substrate.

Belongs to the protein N5-glutamine methyltransferase family. PrmC subfamily.

The catalysed reaction is L-glutaminyl-[peptide chain release factor] + S-adenosyl-L-methionine = N(5)-methyl-L-glutaminyl-[peptide chain release factor] + S-adenosyl-L-homocysteine + H(+). Methylates the class 1 translation termination release factors RF1/PrfA and RF2/PrfB on the glutamine residue of the universally conserved GGQ motif. The sequence is that of Release factor glutamine methyltransferase from Burkholderia pseudomallei (strain K96243).